Consider the following 414-residue polypeptide: Serine hydroxymethyltransferase (414 aa).

Residues leucine 116 and 120 to 122 (GHL) contribute to the (6S)-5,6,7,8-tetrahydrofolate site. Lysine 224 carries the N6-(pyridoxal phosphate)lysine modification. Residues glutamate 240 and 348 to 350 (SPF) contribute to the (6S)-5,6,7,8-tetrahydrofolate site.

This sequence belongs to the SHMT family. In terms of assembly, homodimer. The cofactor is pyridoxal 5'-phosphate.

It localises to the cytoplasm. It carries out the reaction (6R)-5,10-methylene-5,6,7,8-tetrahydrofolate + glycine + H2O = (6S)-5,6,7,8-tetrahydrofolate + L-serine. The protein operates within one-carbon metabolism; tetrahydrofolate interconversion. It participates in amino-acid biosynthesis; glycine biosynthesis; glycine from L-serine: step 1/1. Functionally, catalyzes the reversible interconversion of serine and glycine with tetrahydrofolate (THF) serving as the one-carbon carrier. This reaction serves as the major source of one-carbon groups required for the biosynthesis of purines, thymidylate, methionine, and other important biomolecules. Also exhibits THF-independent aldolase activity toward beta-hydroxyamino acids, producing glycine and aldehydes, via a retro-aldol mechanism. This Campylobacter fetus subsp. fetus (strain 82-40) protein is Serine hydroxymethyltransferase.